Consider the following 590-residue polypeptide: Leukocyte immunoglobulin-like receptor subfamily B member 5 (590 aa).

An N-terminal signal peptide occupies residues 1–23 (MTLTLSVLICLGLSVGPRTCVQA). Residues 24 to 458 (GTLPKPTLWA…PQSGLGRHLG (435 aa)) lie on the Extracellular side of the membrane. Ig-like C2-type domains are found at residues 27 to 116 (PKPT…LELV), 111 to 228 (DPLE…SLLI), 224 to 313 (PSLL…DPLD), and 337 to 418 (GENV…LVVS). The cysteines at positions 49 and 98 are disulfide-linked. N-linked (GlcNAc...) asparagine glycosylation is present at Asn-139. Cystine bridges form between Cys-144–Cys-195 and Cys-244–Cys-295. 2 N-linked (GlcNAc...) asparagine glycosylation sites follow: Asn-279 and Asn-339. Cys-344 and Cys-395 are joined by a disulfide. A compositionally biased stretch (low complexity) spans 416-433 (VVSGPSGDPSLSPTGSTP). Residues 416 to 449 (VVSGPSGDPSLSPTGSTPTPGPEDQPLTPTGLDP) are disordered. A helical transmembrane segment spans residues 459-479 (VVTGVSVAFVLLLFLLLFLLL). Topologically, residues 480 to 590 (RHRHQSKHRT…PSIYAPLAIH (111 aa)) are cytoplasmic. Disordered stretches follow at residues 488-514 (RTSAHFYRPAGAAGPEPKDQGLQKRAS) and 529-550 (KDTQPKDGVEMDAPAAASEAPQ). Ser-514 carries the post-translational modification Phosphoserine. The ITIM motif 1 motif lies at 552–557 (VTYAQL). Basic and acidic residues predominate over residues 562–578 (LRREATEPPPSQEREPP). Positions 562–590 (LRREATEPPPSQEREPPAEPSIYAPLAIH) are disordered. The short motif at 582 to 587 (SIYAPL) is the ITIM motif 2 element.

In terms of tissue distribution, detected in a natural killer (NK) cells.

The protein resides in the membrane. Functionally, may act as receptor for class I MHC antigens. This Homo sapiens (Human) protein is Leukocyte immunoglobulin-like receptor subfamily B member 5 (LILRB5).